The chain runs to 354 residues: 3'-5' exonuclease (354 aa).

The interval 1-120 (MERYLTKMPI…PSPEKEKPEK (120 aa)) is disordered. Basic and acidic residues predominate over residues 13 to 50 (KANEVPKKEAFAKKETPKVARKATKTDTPKELKDKENA). The span at 59-70 (TKGRPGRPAAKR) shows a compositional bias: basic residues. Residues 71–91 (KNLDTPDVKDEKIAMEEENPP) show a composition bias toward basic and acidic residues. A phosphoserine mark is found at serine 104, serine 110, and serine 112. Residues 149 to 314 (WVEKQKDDVV…GQVIYRELER (166 aa)) enclose the 3'-5' exonuclease domain. 3 residues coordinate Mg(2+): aspartate 163, glutamate 165, and aspartate 301.

This sequence belongs to the WRNexo family.

The protein resides in the nucleus. Has exonuclease activity on both single-stranded and duplex templates bearing overhangs, but not blunt ended duplex DNA, and cleaves in a 3'-5' direction. Essential for the formation of DNA replication focal centers. Has an important role in maintaining genome stability. The chain is 3'-5' exonuclease from Drosophila sechellia (Fruit fly).